We begin with the raw amino-acid sequence, 73 residues long: MKKDIHPEYHIIDVKMTDGTVIQMRSTWGAEGDQLSLDIDPSVHPAWTGGTSRLLDTGGRVSKFKKKYEGLGF.

It belongs to the bacterial ribosomal protein bL31 family. Type A subfamily. Part of the 50S ribosomal subunit.

Binds the 23S rRNA. This chain is Large ribosomal subunit protein bL31, found in Dinoroseobacter shibae (strain DSM 16493 / NCIMB 14021 / DFL 12).